Reading from the N-terminus, the 130-residue chain is Small ribosomal subunit protein uS9 (130 aa).

Positions 98–130 are disordered; it reads LKRAGFLTRDARKKERKKYGQPGARKRFQYSKR. A compositionally biased stretch (basic residues) spans 111-130; that stretch reads KERKKYGQPGARKRFQYSKR.

This sequence belongs to the universal ribosomal protein uS9 family.

The chain is Small ribosomal subunit protein uS9 from Sorangium cellulosum (strain So ce56) (Polyangium cellulosum (strain So ce56)).